The chain runs to 92 residues: MPSPTRRSSKSRSKSRSRSRSASASPGKAAKRARSKTPRRGKKRARSPSKKARRRSRSTKKTAAKRRKRSSSPKKRRSAGKRRVRAKKKKKK.

Residues 1–92 (MPSPTRRSSK…RVRAKKKKKK (92 aa)) are disordered. 2 stretches are compositionally biased toward basic residues: residues 7–19 (RSSK…RSRS) and 29–92 (AAKR…KKKK).

In terms of tissue distribution, sperm.

It localises to the nucleus. The protein resides in the chromosome. Involved in nuclear basic protein transition: histones are replaced by spermatid specific proteins which are themselves replaced by protamines in late spermatids. This Mytilus edulis (Blue mussel) protein is Sperm-specific protein Phi-1.